The sequence spans 305 residues: Probable 5-dehydro-4-deoxyglucarate dehydratase (305 aa).

It belongs to the DapA family.

The catalysed reaction is 5-dehydro-4-deoxy-D-glucarate + H(+) = 2,5-dioxopentanoate + CO2 + H2O. The protein operates within carbohydrate acid metabolism; D-glucarate degradation; 2,5-dioxopentanoate from D-glucarate: step 2/2. The sequence is that of Probable 5-dehydro-4-deoxyglucarate dehydratase from Xanthomonas campestris pv. campestris (strain B100).